The chain runs to 205 residues: NADH-quinone oxidoreductase subunit C (205 aa).

Belongs to the complex I 30 kDa subunit family. As to quaternary structure, NDH-1 is composed of 14 different subunits. Subunits NuoB, C, D, E, F, and G constitute the peripheral sector of the complex.

It localises to the cell inner membrane. It carries out the reaction a quinone + NADH + 5 H(+)(in) = a quinol + NAD(+) + 4 H(+)(out). In terms of biological role, NDH-1 shuttles electrons from NADH, via FMN and iron-sulfur (Fe-S) centers, to quinones in the respiratory chain. The immediate electron acceptor for the enzyme in this species is believed to be ubiquinone. Couples the redox reaction to proton translocation (for every two electrons transferred, four hydrogen ions are translocated across the cytoplasmic membrane), and thus conserves the redox energy in a proton gradient. This chain is NADH-quinone oxidoreductase subunit C, found in Nitrosospira multiformis (strain ATCC 25196 / NCIMB 11849 / C 71).